Here is a 510-residue protein sequence, read N- to C-terminus: NAD(P)H-quinone oxidoreductase subunit 2 B, chloroplastic (510 aa).

13 consecutive transmembrane segments (helical) span residues 24-44, 57-77, 99-119, 124-144, 149-169, 183-203, 227-247, 295-315, 323-343, 354-374, 395-415, 418-438, and 484-504; these read LLLF…GLIL, IPWL…ALLF, IFQF…VEYI, MAIT…MFLC, LITI…LSGY, YLLM…WLYG, PGIS…LSLA, WHLL…LIAI, MLAY…IVGD, YMLF…LFGL, ALSL…AGFF, LHLF…IGLL, and MIVC…IIAI.

The protein belongs to the complex I subunit 2 family. In terms of assembly, NDH is composed of at least 16 different subunits, 5 of which are encoded in the nucleus.

The protein localises to the plastid. It is found in the chloroplast thylakoid membrane. It carries out the reaction a plastoquinone + NADH + (n+1) H(+)(in) = a plastoquinol + NAD(+) + n H(+)(out). The enzyme catalyses a plastoquinone + NADPH + (n+1) H(+)(in) = a plastoquinol + NADP(+) + n H(+)(out). NDH shuttles electrons from NAD(P)H:plastoquinone, via FMN and iron-sulfur (Fe-S) centers, to quinones in the photosynthetic chain and possibly in a chloroplast respiratory chain. The immediate electron acceptor for the enzyme in this species is believed to be plastoquinone. Couples the redox reaction to proton translocation, and thus conserves the redox energy in a proton gradient. The polypeptide is NAD(P)H-quinone oxidoreductase subunit 2 B, chloroplastic (Citrus sinensis (Sweet orange)).